The following is a 460-amino-acid chain: Mogroside I-E synthase (460 aa).

The active-site Proton acceptor is histidine 25. Catalysis depends on aspartate 114, which acts as the Charge relay. UDP-alpha-D-glucose-binding residues include serine 286, cysteine 339, glutamine 341, tryptophan 359, asparagine 360, serine 361, glutamate 364, aspartate 380, and glutamine 381.

The protein belongs to the UDP-glycosyltransferase family. In terms of tissue distribution, highly expressed in young fruits 15 days after anthesis (15-DAA).

It carries out the reaction mogrol + UDP-alpha-D-glucose = mogroside IE + UDP + H(+). The enzyme catalyses mogroside I-A1 + UDP-alpha-D-glucose = mogroside IIE + UDP + H(+). It catalyses the reaction mogroside II-A1 + UDP-alpha-D-glucose = mogroside IIIX + UDP + H(+). The catalysed reaction is mogroside II-A + UDP-alpha-D-glucose = mogroside III + UDP + H(+). It carries out the reaction mogroside III-A1 + UDP-alpha-D-glucose = siamenoside I + UDP + H(+). Its pathway is secondary metabolite biosynthesis; terpenoid biosynthesis. Its function is as follows. UDP-glycosyltransferase involved in the biosynthesis of cucurbitacin and mogroside tetracyclic triterpene natural products (e.g. siamenoside I and mogrosides IV, V and VI). Cucurbitacins have cytotoxic properties and exhibit deterrent taste as a defense barrier against herbivores. Mogrosides are nonsugar highly oxygenated compounds used as high-intensity zero-calorie sweeteners; they also possess pharmacological properties such as regulating immunity, lowering blood sugar and lipid levels, protecting the liver, and acting as antioxidants and antitumor agents. Catalyzes the C3 primary glucosylation of mogrol, mogroside I-A1, mogroside II-A1, mogroside II-A and mogroside III-A1. The chain is Mogroside I-E synthase from Siraitia grosvenorii (Monk's fruit).